The sequence spans 159 residues: Endoribonuclease YbeY (159 aa).

Positions 124, 128, and 134 each coordinate Zn(2+).

Belongs to the endoribonuclease YbeY family. Requires Zn(2+) as cofactor.

The protein localises to the cytoplasm. In terms of biological role, single strand-specific metallo-endoribonuclease involved in late-stage 70S ribosome quality control and in maturation of the 3' terminus of the 16S rRNA. This Halalkalibacterium halodurans (strain ATCC BAA-125 / DSM 18197 / FERM 7344 / JCM 9153 / C-125) (Bacillus halodurans) protein is Endoribonuclease YbeY.